Consider the following 275-residue polypeptide: TATA-box-binding protein (275 aa).

Disordered regions lie at residues 23–45 (EDESIQTQQQQQTPRHPASFGMN) and 73–92 (GSMSIYGPGTPAPATPHTPA). 2 consecutive repeat copies span residues 103 to 179 (LENI…ARIV) and 193 to 270 (IQNM…YPIL).

The protein belongs to the TBP family. As to quaternary structure, belongs to the TFIID complex together with the TBP-associated factors (TAFs). Binds DNA as monomer.

It localises to the nucleus. General transcription factor that functions at the core of the DNA-binding multiprotein factor TFIID. Binding of TFIID to the TATA box is the initial transcriptional step of the pre-initiation complex (PIC), playing a role in the activation of eukaryotic genes transcribed by RNA polymerase II. In Artemia franciscana (Brine shrimp), this protein is TATA-box-binding protein.